The chain runs to 423 residues: Imidazolonepropionase (423 aa).

The Fe(3+) site is built by histidine 78 and histidine 80. The Zn(2+) site is built by histidine 78 and histidine 80. 3 residues coordinate 4-imidazolone-5-propanoate: arginine 87, tyrosine 150, and histidine 183. Tyrosine 150 contacts N-formimidoyl-L-glutamate. Fe(3+) is bound at residue histidine 247. Histidine 247 serves as a coordination point for Zn(2+). Position 250 (glutamate 250) interacts with 4-imidazolone-5-propanoate. Residue aspartate 322 coordinates Fe(3+). Aspartate 322 serves as a coordination point for Zn(2+). N-formimidoyl-L-glutamate contacts are provided by asparagine 324 and glycine 326. Position 327 (serine 327) interacts with 4-imidazolone-5-propanoate.

This sequence belongs to the metallo-dependent hydrolases superfamily. HutI family. Zn(2+) serves as cofactor. It depends on Fe(3+) as a cofactor.

It is found in the cytoplasm. It catalyses the reaction 4-imidazolone-5-propanoate + H2O = N-formimidoyl-L-glutamate. Its pathway is amino-acid degradation; L-histidine degradation into L-glutamate; N-formimidoyl-L-glutamate from L-histidine: step 3/3. Functionally, catalyzes the hydrolytic cleavage of the carbon-nitrogen bond in imidazolone-5-propanoate to yield N-formimidoyl-L-glutamate. It is the third step in the universal histidine degradation pathway. The chain is Imidazolonepropionase from Bacillus cytotoxicus (strain DSM 22905 / CIP 110041 / 391-98 / NVH 391-98).